Reading from the N-terminus, the 119-residue chain is Large ribosomal subunit protein bL20c (119 aa).

Belongs to the bacterial ribosomal protein bL20 family.

It is found in the plastid. The protein resides in the chloroplast. Its function is as follows. Binds directly to 23S ribosomal RNA and is necessary for the in vitro assembly process of the 50S ribosomal subunit. It is not involved in the protein synthesizing functions of that subunit. This Lolium perenne (Perennial ryegrass) protein is Large ribosomal subunit protein bL20c.